The primary structure comprises 371 residues: UDP-N-acetylglucosamine--N-acetylmuramyl-(pentapeptide) pyrophosphoryl-undecaprenol N-acetylglucosamine transferase (371 aa).

UDP-N-acetyl-alpha-D-glucosamine-binding positions include 15-17 (TGG), Asn-126, Arg-172, Ser-199, Ile-256, 275-280 (ALTVSE), and Gln-301.

It belongs to the glycosyltransferase 28 family. MurG subfamily.

The protein resides in the cell inner membrane. It carries out the reaction di-trans,octa-cis-undecaprenyl diphospho-N-acetyl-alpha-D-muramoyl-L-alanyl-D-glutamyl-meso-2,6-diaminopimeloyl-D-alanyl-D-alanine + UDP-N-acetyl-alpha-D-glucosamine = di-trans,octa-cis-undecaprenyl diphospho-[N-acetyl-alpha-D-glucosaminyl-(1-&gt;4)]-N-acetyl-alpha-D-muramoyl-L-alanyl-D-glutamyl-meso-2,6-diaminopimeloyl-D-alanyl-D-alanine + UDP + H(+). It functions in the pathway cell wall biogenesis; peptidoglycan biosynthesis. In terms of biological role, cell wall formation. Catalyzes the transfer of a GlcNAc subunit on undecaprenyl-pyrophosphoryl-MurNAc-pentapeptide (lipid intermediate I) to form undecaprenyl-pyrophosphoryl-MurNAc-(pentapeptide)GlcNAc (lipid intermediate II). This chain is UDP-N-acetylglucosamine--N-acetylmuramyl-(pentapeptide) pyrophosphoryl-undecaprenol N-acetylglucosamine transferase, found in Francisella philomiragia subsp. philomiragia (strain ATCC 25017 / CCUG 19701 / FSC 153 / O#319-036).